The primary structure comprises 409 residues: N-acetylglucosamine-6-phosphate deacetylase (409 aa).

Glu143 is an a divalent metal cation binding site. 154–155 (AH) contacts substrate. A divalent metal cation is bound by residues His211 and His232. Residues 235-236 (NA), Arg243, and 269-272 (DGIH) contribute to the substrate site. The Proton donor/acceptor role is filled by Asp294. 328–330 (LSG) provides a ligand contact to substrate.

It belongs to the metallo-dependent hydrolases superfamily. NagA family. A divalent metal cation serves as cofactor.

It carries out the reaction N-acetyl-D-glucosamine 6-phosphate + H2O = D-glucosamine 6-phosphate + acetate. The protein operates within amino-sugar metabolism; N-acetylneuraminate degradation. In terms of biological role, hydrolyzes the N-glycolyl group from N-glycolylglucosamine 6-phosphate (GlcNGc-6-P) in the N-glycolylneuraminic acid (Neu5Gc) degradation pathway. This Rattus norvegicus (Rat) protein is N-acetylglucosamine-6-phosphate deacetylase (Amdhd2).